The sequence spans 145 residues: UPF0201 protein STK_09490 (145 aa).

Belongs to the UPF0201 family.

This Sulfurisphaera tokodaii (strain DSM 16993 / JCM 10545 / NBRC 100140 / 7) (Sulfolobus tokodaii) protein is UPF0201 protein STK_09490.